The primary structure comprises 283 residues: MQQIYTVKEIRSVAARSGPFAPVLSATSRGVAGALRPLVQATVPATPEQPVLDLKRPFLSRESLSGQAVRRPLVASVGLNVPASVCYSHTDIKVPDFSEYRRLEVLDSTKSSRESTEARKGFSYLVTGVTTVGVAYAAKNAVTQFVSSMSASADVLALAKIEIKLSDIPEGKNMAFKWRGKPLFVRHRTQKEIKQEAAVELSQLRDPQHDLDRVKKPEWVILIGVCTHLGCVPIANAGDFGGYYCPCHGSHYDASGRIRLGPATLNLEVPTYEFTSDDMVIVG.

The chain crosses the membrane as a helical span at residues 116-149; it reads TEARKGFSYLVTGVTTVGVAYAAKNAVTQFVSSM. The Rieske domain maps to 196 to 281; that stretch reads EAAVELSQLR…YEFTSDDMVI (86 aa). [2Fe-2S] cluster-binding residues include C226, H228, C245, and H248. A disulfide bridge connects residues C231 and C247.

The protein belongs to the Rieske iron-sulfur protein family. [2Fe-2S] cluster is required as a cofactor.

It localises to the membrane. The protein is Putative cytochrome b-c1 complex subunit Rieske-like protein 1 (UQCRFS1P1) of Homo sapiens (Human).